The following is a 55-amino-acid chain: Ferredoxin-1 (55 aa).

4Fe-4S ferredoxin-type domains lie at 2 to 27 (YKIE…EQGD) and 28 to 55 (TIFV…PVAE). Residues cysteine 8, cysteine 11, cysteine 14, cysteine 18, cysteine 37, cysteine 40, cysteine 43, and cysteine 47 each contribute to the [4Fe-4S] cluster site.

Requires [4Fe-4S] cluster as cofactor.

In terms of biological role, ferredoxins are iron-sulfur proteins that transfer electrons in a wide variety of metabolic reactions. The protein is Ferredoxin-1 of Rhodospirillum rubrum.